The primary structure comprises 224 residues: Pre-hexon-linking protein VIII (224 aa).

Thr-64 carries the post-translational modification Phosphothreonine; by host. A propeptide spanning residues Arg-112–Gly-154 is cleaved from the precursor.

The protein belongs to the adenoviridae hexon-linking protein family. Interacts with the peripentonal hexons as well as the hexons in the facets. Part of a complex composed of the core-capsid bridging protein, the endosome lysis protein VI and the hexon-linking protein VIII; these interactions bridge the virus core to the capsid. Post-translationally, cleaved by the viral protease during virion maturation. May cause the middle segment to be shed from the capsid.

It is found in the virion. The protein resides in the host nucleus. Functionally, structural component of the virion that acts as a cement protein on the capsid interior and which glue the peripentonal hexons and group-of-nine hexons together. The protein is Pre-hexon-linking protein VIII of Canis lupus familiaris (Dog).